Consider the following 956-residue polypeptide: Bromodomain testis-specific protein (956 aa).

The Bromo 1 domain maps to 26–132 (RLTNQLQFLQ…KLFMQKLSQM (107 aa)). Ser186 is subject to Phosphoserine. A Nuclear localization signal motif is present at residues 208-219 (KGVKRRADTTTP). The disordered stretch occupies residues 210-239 (VKRRADTTTPTTSIAKASSESPPTLRETKP). Residues 216 to 231 (TTTPTTSIAKASSESP) show a composition bias toward polar residues. In terms of domain architecture, Bromo 2 spans 266 to 375 (VKVTEQLKHC…DVFELHFAKI (110 aa)). 4 disordered regions span residues 391 to 420 (NSAQ…ERVQ), 442 to 508 (VPLR…PMNY), 607 to 747 (NQLN…HSQQ), and 859 to 934 (LEHN…RREA). Low complexity predominate over residues 392-409 (SAQALSRESSSEASSGDA). Positions 417–442 (ERVQHLAKLQEQLNAVHQQLQVLSQV) form a coiled coil. A compositionally biased stretch (basic residues) spans 445–463 (RKLKKKNEKSKRAPKRKKV). Positions 496–578 (KSEEEDNAKP…ACLRKRSLKP (83 aa)) constitute an NET domain. Over residues 625–640 (PPPPPPPPPPPPPPPE) the composition is skewed to pro residues. Low complexity predominate over residues 649-688 (DSSSSSGSGSGSSSSSSGSSSSSSSSGSASSSSDSSSSDS). A compositionally biased stretch (polar residues) spans 714-724 (KQIQSSVQDIT). Positions 844 to 940 (EKEVKARTQE…RREAMAGTID (97 aa)) form a coiled coil. Basic and acidic residues-rich tracts occupy residues 859–874 (LEHN…ENQR) and 915–934 (LLKD…RREA).

The protein belongs to the BET family. Interacts with SMARCE1. Interacts with mRNA splicing machinery proteins SRSF2, DDX5, HNRNPK and TARDBP. Interacts with the acetylated N-terminus of histone H1, H2, H3 and H4. Interacts with P-TEFb components CDK9 and CCNT1/cyclin-T1. In terms of processing, ubiquitinated in a SPOP-dependent manner, leading to proteasomal degradation. As to expression, testis-specific. Expressed in germinal cells from the early meiotic (pachytene) spermatocytes and during spermiogenesis in the round and elongating spermatids until the condensed late spermatids. No expression seen in spermatogonia.

The protein resides in the nucleus. Functionally, testis-specific chromatin protein that specifically binds histone H4 acetylated at 'Lys-5' and 'Lys-8' (H4K5ac and H4K8ac, respectively) and plays a key role in spermatogenesis. Required in late pachytene spermatocytes: plays a role in meiotic and post-meiotic cells by binding to acetylated histones at the promoter of specific meiotic and post-meiotic genes, facilitating their activation at the appropriate time. In the post-meiotic phase of spermatogenesis, binds to hyperacetylated histones and participates in their general removal from DNA. Also recognizes and binds a subset of butyrylated histones: able to bind histone H4 butyrylated at 'Lys-8' (H4K8ac), while it is not able to bind H4 butyrylated at 'Lys-5' (H4K5ac). Also acts as a component of the splicing machinery in pachytene spermatocytes and round spermatids and participates in 3'-UTR truncation of specific mRNAs in post-meiotic spermatids. Required for chromocenter organization, a structure comprised of peri-centromeric heterochromatin. This is Bromodomain testis-specific protein (Brdt) from Mus musculus (Mouse).